Consider the following 720-residue polypeptide: Collectin-12 (720 aa).

Residues 1–37 (MKDDFNDEEEVQSFGYKRFGIQEGNECTKCKNDWALR) lie on the Cytoplasmic side of the membrane. The helical; Signal-anchor for type II membrane protein transmembrane segment at 38 to 58 (VAIALLYVLCALLTIAVAVLG) threads the bilayer. Over 59–720 (YKVVQRMDNV…RTNESKVPVL (662 aa)) the chain is Extracellular. Coiled coils occupy residues 95–120 (EKSENATSELHSFKLEFQTLQKQLSD), 216–267 (ISSL…LAAN), and 377–408 (LHGLNNSVAETRAESTELKAQQEELAVRLDKE). The interval 433–576 (FTILQGPPGP…GPPGLPGLPA (144 aa)) is disordered. 2 Collagen-like domains span residues 444 to 503 (GPRG…PGPK) and 510 to 569 (GRQG…PGPP). A compositionally biased stretch (basic and acidic residues) spans 460–479 (PKGEKGEKGAPGDAGPKGEK). Positions 488-503 (PGLKGPPGSRGSPGPK) are enriched in low complexity. Residues 504 to 513 (GSRGSGGRQG) show a composition bias toward gly residues. Positions 527–560 (PGRDGQPGPTGPQGPQGLRGPAGPAGLEGARGPV) are enriched in low complexity. Residues 562 to 576 (PIGPPGPPGLPGLPA) are compositionally biased toward pro residues. 3 cysteine pairs are disulfide-bonded: cysteine 604/cysteine 615, cysteine 634/cysteine 709, and cysteine 687/cysteine 701. In terms of domain architecture, C-type lectin spans 611 to 710 (FREQCYHFSA…CTERIGFICE (100 aa)). 3 residues coordinate Ca(2+): isoleucine 643, asparagine 645, and glutamate 649. Residues lysine 670, glutamine 673, and aspartate 675 each coordinate a carbohydrate. Residues glutamine 673, aspartate 675, asparagine 676, glutamate 685, aspartate 686, asparagine 697, aspartate 698, and glutamate 710 each coordinate Ca(2+). Glutamate 685 is an a carbohydrate binding site. Asparagine 697 and aspartate 698 together coordinate a carbohydrate.

Its subcellular location is the membrane. Its function is as follows. Scavenger receptor that displays several functions associated with host defense. Binds to carbohydrates. In Danio rerio (Zebrafish), this protein is Collectin-12 (colec12).